We begin with the raw amino-acid sequence, 405 residues long: Na(+)/H(+) antiporter NhaA 1 (405 aa).

11 consecutive transmembrane segments (helical) span residues 20 to 40 (FVSD…AMIV), 68 to 88 (LHLW…GLEV), 105 to 125 (LPVL…VGVV), 134 to 154 (GWAI…GLLG), 163 to 183 (LFLL…IAAF), 186 to 206 (ANLK…MVGM), 214 to 234 (IWPY…SGVH), 263 to 283 (GLAP…NAGV), 301 to 321 (IAAG…VAAV), 334 to 354 (WIEI…SLFI), and 371 to 391 (IGIL…LRLT).

Belongs to the NhaA Na(+)/H(+) (TC 2.A.33) antiporter family.

The protein localises to the cell inner membrane. The catalysed reaction is Na(+)(in) + 2 H(+)(out) = Na(+)(out) + 2 H(+)(in). Na(+)/H(+) antiporter that extrudes sodium in exchange for external protons. The chain is Na(+)/H(+) antiporter NhaA 1 from Erythrobacter litoralis (strain HTCC2594).